The chain runs to 205 residues: MGRNPLIIGITGRIASGKDAASKIISNKYGFYEISADKLGHLVLHEKKEELVKIFGQKILNTRNEIDRLLIRNLVFNDNKELKKLESISHPIIFNKIKKILIQNQSTKIIINAALLFKINLEKLCDYIIVVKAKAPIIKNRLSYSMPSIDSNIINKILEIQKDIFFKKNIINLKIINIINNKNYAYLEKEIEKKMQEIINYERFE.

Residues 7-205 (IIGITGRIAS…QEIINYERFE (199 aa)) enclose the DPCK domain. Residue 15–20 (ASGKDA) coordinates ATP.

Belongs to the CoaE family.

It localises to the cytoplasm. The enzyme catalyses 3'-dephospho-CoA + ATP = ADP + CoA + H(+). It participates in cofactor biosynthesis; coenzyme A biosynthesis; CoA from (R)-pantothenate: step 5/5. Catalyzes the phosphorylation of the 3'-hydroxyl group of dephosphocoenzyme A to form coenzyme A. This is Dephospho-CoA kinase from Borrelia garinii subsp. bavariensis (strain ATCC BAA-2496 / DSM 23469 / PBi) (Borreliella bavariensis).